A 1041-amino-acid polypeptide reads, in one-letter code: Collagen alpha-2(I) chain (1041 aa).

A disordered region spans residues 1-1041 (SGGFDFSFLP…FGYEGDFYRA (1041 aa)). 4-hydroxyproline occurs at positions 10, 13, 39, and 45. 2 stretches are compositionally biased toward low complexity: residues 25-45 (LGPG…SGAP) and 55-76 (EPGE…PPGK). The segment covering 77–91 (AGEDGHPGKPGRPGE) has biased composition (basic and acidic residues). K113 carries the 5-hydroxylysine; alternate modification. K113 carries an O-linked (Gal...) hydroxylysine; alternate glycan. Low complexity-rich tracts occupy residues 174 to 189 (SVGP…SAGP) and 235 to 256 (PGAN…AGAP). A compositionally biased stretch (gly residues) spans 290-299 (GESGGKGEPG). The segment covering 300–310 (SAGPQGPPGSS) has biased composition (low complexity). Positions 332–341 (GLRGGPGSRG) are enriched in gly residues. Residues 354–370 (PAGARGASGPAGVRGPS) are compositionally biased toward low complexity. Residues P376 and P379 each carry the 4-hydroxyproline modification. Positions 405–424 (LPGIDGRPGPIGPAGARGEA) are enriched in low complexity. Positions 466–475 (GVQGGKGEQG) are enriched in gly residues. Composition is skewed to low complexity over residues 522–539 (SGES…SRGP) and 551–561 (EPGVVGAPGTA). Positions 562 to 571 (GPAGSGGLPG) are enriched in gly residues. Low complexity-rich tracts occupy residues 594–638 (VGTT…PRGS) and 645–665 (VGPA…QPGA). The segment covering 666–675 (KGERGTKGPK) has biased composition (basic and acidic residues). Low complexity predominate over residues 683-693 (PTGPVGSAGPA). A compositionally biased stretch (gly residues) spans 703–712 (GSRGDGGPPG). Positions 714 to 723 (TGFPGAAGRT) are enriched in low complexity. Gly residues predominate over residues 754–768 (GPVGRGETGAGGPPG). Composition is skewed to low complexity over residues 769–803 (FTGE…LGLP) and 811–821 (LPGVAGAVGEP). Over residues 822–840 (GPLGIGPPGARGPSGGVPG) the composition is skewed to gly residues. Low complexity-rich tracts occupy residues 874–887 (YAGN…AGAP) and 903–918 (EPGP…ALGP). The span at 928 to 939 (RGDKGEAGDKGP) shows a compositional bias: basic and acidic residues. Residues 1013 to 1023 (PAGPPGPPGPP) show a composition bias toward pro residues.

The protein belongs to the fibrillar collagen family. Trimers of one alpha 2(I) and two alpha 1(I) chains. Interacts (via C-terminus) with TMEM131 (via PapD-L domain); the interaction is direct and is involved in assembly and TRAPPIII ER-to-Golgi transport complex-dependent secretion of collagen. Post-translationally, prolines at the third position of the tripeptide repeating unit (G-X-Y) are hydroxylated in some or all of the chains. As to expression, expressed in bones.

Its subcellular location is the secreted. The protein resides in the extracellular space. It is found in the extracellular matrix. In terms of biological role, type I collagen is a member of group I collagen (fibrillar forming collagen). The chain is Collagen alpha-2(I) chain from Paramylodon harlani (Harlan's ground sloth).